We begin with the raw amino-acid sequence, 368 residues long: Nucleotide pyrophosphatase/phosphodiesterase (368 aa).

The protein belongs to the metallophosphoesterase superfamily. As to quaternary structure, monomer and homomer. Glycosylated.

Its subcellular location is the plastid. It localises to the chloroplast. Its function is as follows. Hydrolyzes pyrophosphate, phosphodiester and phosphosulfate linkages of nucleotide-sugars, sulfonucleotides and nucleoside di and triphosphates. Highest activity observed with the substrates ADP-glucose and adenosine 5'-phosphosulfate. The polypeptide is Nucleotide pyrophosphatase/phosphodiesterase (Hordeum vulgare (Barley)).